Consider the following 713-residue polypeptide: Segment polarity protein dishevelled homolog DVL-3 (713 aa).

A DIX domain is found at 1 to 82 (MGETKVIYHL…RVVCWLVSAD (82 aa)). Composition is skewed to polar residues over residues 87–98 (DAGSVCADNQSD) and 118–127 (HPNTRGSQEN). Residues 87–235 (DAGSVCADNQ…PRIERSSSFS (149 aa)) are disordered. Over residues 140-155 (AHRERPRRKETPEHAT) the composition is skewed to basic and acidic residues. Residues 173 to 189 (ESSSTLMSSELDSTSFF) are compositionally biased toward low complexity. Positions 199 to 210 (RFSNSTEQSSAS) are enriched in polar residues. Residues 212 to 225 (LMRRHKRRRRKPKA) are compositionally biased toward basic residues. A PDZ domain is found at 248-333 (TVTLNMEKYN…KPGPITLTVA (86 aa)). Residues 421–495 (PESGLEVRDR…SEQCYYIFGD (75 aa)) form the DEP domain. Polar residues predominate over residues 508–518 (HDGSSGTSDQD). Disordered stretches follow at residues 508–527 (HDGS…PHPG) and 545–652 (YSPH…GPPG). Residues 564–579 (GSQHSEGSRSSGSNRS) are compositionally biased toward low complexity. Basic and acidic residues-rich tracts occupy residues 580-593 (STEK…KGGD) and 602-618 (ESDH…RAAS). Over residues 629–646 (HRSHHSIAHSIRSHHTHH) the composition is skewed to basic residues.

This sequence belongs to the DSH family.

It localises to the cytoplasm. Involved in the signal transduction pathway mediated by multiple Wnt genes. Required during ciliogenesis for the docking of basal bodies to the apical plasma membrane. This chain is Segment polarity protein dishevelled homolog DVL-3, found in Xenopus tropicalis (Western clawed frog).